Reading from the N-terminus, the 212-residue chain is Ras-related protein Rab-21 (212 aa).

GTP contacts are provided by residues 14–21, 62–66, and 120–123; these read GEGCVGKT, DTAGQ, and NKCD. The segment at 181-212 is disordered; it reads TNTTGQTTNRSERIPIVPDSDSGNKQPGCCSN. A compositionally biased stretch (polar residues) spans 201–212; sequence DSGNKQPGCCSN. 2 S-geranylgeranyl cysteine lipidation sites follow: Cys-209 and Cys-210.

The protein belongs to the small GTPase superfamily. Rab family. Interacts with LIM domain proteins limF and ChLim.

It is found in the cell membrane. Involved in the regulation of phagocytosis. In Dictyostelium discoideum (Social amoeba), this protein is Ras-related protein Rab-21 (rab21).